A 265-amino-acid chain; its full sequence is Proteasome subunit alpha (265 aa).

The interval 236–265 (EKDSKGSKGAQNPKGARDSKNSKSYGESTD) is disordered.

The protein belongs to the peptidase T1A family. As to quaternary structure, the 20S proteasome core is composed of 14 alpha and 14 beta subunits that assemble into four stacked heptameric rings, resulting in a barrel-shaped structure. The two inner rings, each composed of seven catalytic beta subunits, are sandwiched by two outer rings, each composed of seven alpha subunits. The catalytic chamber with the active sites is on the inside of the barrel. Has a gated structure, the ends of the cylinder being occluded by the N-termini of the alpha-subunits. Is capped by the proteasome-associated ATPase, ARC.

The protein localises to the cytoplasm. Its pathway is protein degradation; proteasomal Pup-dependent pathway. Its activity is regulated as follows. The formation of the proteasomal ATPase ARC-20S proteasome complex, likely via the docking of the C-termini of ARC into the intersubunit pockets in the alpha-rings, may trigger opening of the gate for substrate entry. Interconversion between the open-gate and close-gate conformations leads to a dynamic regulation of the 20S proteasome proteolysis activity. In terms of biological role, component of the proteasome core, a large protease complex with broad specificity involved in protein degradation. This chain is Proteasome subunit alpha, found in Mycobacterium leprae (strain Br4923).